The chain runs to 309 residues: MEKVLVFGHKNPDTDAICSAIAYAELKKELGMNAEPVRLGEISGETQFALDYFKVEGPRFVETVANEVDNVILVDHNERQQSANDIESVRVLEVIDHHRIANFETSDPIYYRCEPVGCTATILNKMYKENGITIRKEVAGLMLSAIISDSLLFKSPTCTEQDVAAARELAEIAGVDADNYGLEMLKAGADLSGKTMEQLISLDAKEFQMGNAKVEIAQVNAVDTNDVLVHQAELEKVISAVVEEKGLDLFLFVVTDILTNDSVGLAIGNAANVVEKAYNVSLENNTATLKGVVSRKKQIVPVLTEAFQA.

Mn(2+)-binding residues include His-9, Asp-13, Asp-15, Asp-75, His-97, and Asp-149.

This sequence belongs to the PPase class C family. It depends on Mn(2+) as a cofactor.

The protein localises to the cytoplasm. The catalysed reaction is diphosphate + H2O = 2 phosphate + H(+). This Bacillus cereus (strain ATCC 10987 / NRS 248) protein is Probable manganese-dependent inorganic pyrophosphatase.